An 802-amino-acid polypeptide reads, in one-letter code: G-type lectin S-receptor-like serine/threonine-protein kinase At1g61550 (802 aa).

Residues Met1 to Ala19 form the signal peptide. The Bulb-type lectin domain occupies Ala20 to Phe139. Over Ala20–Thr421 the chain is Extracellular. N-linked (GlcNAc...) asparagine glycosylation is found at Asn48, Asn89, Asn112, Asn231, and Asn262. One can recognise an EGF-like domain in the interval Pro273–Glu309. Intrachain disulfides connect Cys277-Cys289 and Cys283-Cys297. 3 N-linked (GlcNAc...) asparagine glycosylation sites follow: Asn315, Asn331, and Asn370. One can recognise a PAN domain in the interval Cys328–Ser410. Disulfide bonds link Cys363–Cys384 and Cys367–Cys373. A helical membrane pass occupies residues Ile422 to Phe442. The Cytoplasmic segment spans residues Trp443–Arg802. Residues Phe489–Phe774 form the Protein kinase domain. Residues Leu495–Val503 and Lys517 contribute to the ATP site. Phosphoserine is present on residues Ser523 and Ser538. Residues Arg578–Ile595 are caM-binding. The active-site Proton acceptor is the Asp614. Phosphoserine is present on residues Ser618 and Ser631. Thr648 is modified (phosphothreonine). Position 691 is a phosphoserine (Ser691).

The protein belongs to the protein kinase superfamily. Ser/Thr protein kinase family.

The protein resides in the cell membrane. The catalysed reaction is L-seryl-[protein] + ATP = O-phospho-L-seryl-[protein] + ADP + H(+). It catalyses the reaction L-threonyl-[protein] + ATP = O-phospho-L-threonyl-[protein] + ADP + H(+). The sequence is that of G-type lectin S-receptor-like serine/threonine-protein kinase At1g61550 from Arabidopsis thaliana (Mouse-ear cress).